Here is a 64-residue protein sequence, read N- to C-terminus: Alpha-conotoxin-like Ac1.1a (64 aa).

Positions 1-21 (MGMRMMFTLFLLVVLTTTVVS) are cleaved as a signal peptide. Residues 22–47 (YPSDSASDGRDDEAKDERSDMYELKR) constitute a propeptide that is removed on maturation. 2 disulfide bridges follow: cysteine 51–cysteine 56 and cysteine 52–cysteine 62. Position 62 is a cysteine amide (cysteine 62).

Belongs to the conotoxin A superfamily. As to expression, expressed by the venom duct.

The protein resides in the secreted. Its function is as follows. Alpha-conotoxins act on postsynaptic membranes, they bind to the nicotinic acetylcholine receptors (nAChR) and thus inhibit them. The sequence is that of Alpha-conotoxin-like Ac1.1a from Conus achatinus (Little frog cone).